The following is a 340-amino-acid chain: uncharacterized protein (340 aa).

An N-terminal signal peptide occupies residues 1-20 (MGGARRLKLDGSIPNQLARA).

This is an uncharacterized protein from Mycobacterium tuberculosis (strain CDC 1551 / Oshkosh).